Reading from the N-terminus, the 207-residue chain is Abscisic acid receptor PYL9 (207 aa).

Residues 31–197 form an START-like region; the sequence is FPPSTTTATT…NLQMLAAVAE (167 aa). Abscisate is bound by residues Lys-74, 104–109, 131–137, and Glu-162; these read ASTSTE and RLRNYRS. Residues 100–104 carry the Gate loop motif; the sequence is SGLPA. A Latch loop motif is present at residues 130–132; it reads HRL.

Belongs to the PYR/PYL/RCAR abscisic acid intracellular receptor family. As to quaternary structure, homodimer. Interacts with PP2C06. Interacts with PP2C50. Binding to PP2C50 is dependent on the presence of abscisic acid (ABA). Interacts with PP2C30 and PP2C53. Binding to PP2C30 and PP2C53 is dependent on the presence of ABA.

It localises to the cytoplasm. The protein localises to the cytosol. Its subcellular location is the nucleus. In terms of biological role, involved in abscisic acid (ABA) signaling during seed germination and abiotic stress response. Acts as a positive regulator of ABA-mediated inhibition of seed germination, and tolerance to drought and cold stresses. Inhibits the activity of the protein phosphatases PP2C06 and PP2C09 when activated by abscisic acid (ABA). This is Abscisic acid receptor PYL9 from Oryza sativa subsp. japonica (Rice).